A 302-amino-acid polypeptide reads, in one-letter code: Oxygen-dependent coproporphyrinogen-III oxidase (302 aa).

S94 is a binding site for substrate. Residues H98 and H108 each coordinate a divalent metal cation. H108 functions as the Proton donor in the catalytic mechanism. 110–112 (NVR) is a binding site for substrate. A divalent metal cation is bound by residues H147 and H177. The tract at residues 242–277 (YVEFNLVYDRGTLFGLQTGGRTESILMSMPPLVRWQ) is important for dimerization. 260 to 262 (GGR) serves as a coordination point for substrate.

The protein belongs to the aerobic coproporphyrinogen-III oxidase family. Homodimer. A divalent metal cation is required as a cofactor.

The protein localises to the cytoplasm. The catalysed reaction is coproporphyrinogen III + O2 + 2 H(+) = protoporphyrinogen IX + 2 CO2 + 2 H2O. It functions in the pathway porphyrin-containing compound metabolism; protoporphyrin-IX biosynthesis; protoporphyrinogen-IX from coproporphyrinogen-III (O2 route): step 1/1. In terms of biological role, involved in the heme biosynthesis. Catalyzes the aerobic oxidative decarboxylation of propionate groups of rings A and B of coproporphyrinogen-III to yield the vinyl groups in protoporphyrinogen-IX. The protein is Oxygen-dependent coproporphyrinogen-III oxidase of Shewanella sp. (strain ANA-3).